The chain runs to 1313 residues: MESGGGNAPAGALGAASESPQCPPPPGVEGAAGPAEPDGAAEGAAGGSGEGESGGGPRRALRAVYVRSESSQGGAAGGPEAGARQCLLRACEAEGAHLTSVPFGELDFGETAVLDAFYDADVAVVDMSDVSRQPSLFYHLGVRESFDMANNVILYHDTDADTALSLKDMVTQKNTASSGNYYFIPYIVTPCADYFCCESDAQRRASEYMQPNWDNILGPLCMPLVDRFISLLKDIHVTSCVYYKETLLNDIRKAREKYQGEELAKELARIKLRMDNTEVLTSDIIINLLLSYRDIQDYDAMVKLVETLEMLPTCDLADQHNIKFHYAFALNRRNSTGDREKALQIMLQVLQSCDHPGPDMFCLCGRIYKDIFLDSDCKDDTSRDSAIEWYRKGFELQSSLYSGINLAVLLIVAGQQFETSLELRKIGVRLNSLLGRKGSLEKMNNYWDVGQFFSVSMLAHDVGKAVQAAERLFKLKPPVWYLRSLVQNLLLIRRFKKTIIEHSPRQERLNFWLDIIFEATNEVTNGLRFPVLVIEPTKVYQPSYVSINNEAEERTVSLWHVSPTEMKQMHEWNFTASSIKGISLSKFDERCCFLYVHDNSDDFQIYFSTEEQCSRFFSLVKEMITNTAGSTVELEGETDGDTLEYEYDHDANGERVVLGKGTYGIVYAGRDLSNQVRIAIKEIPERDSRYSQPLHEEIALHKYLKHRNIVQYLGSVSENGYIKIFMEQVPGGSLSALLRSKWGPMKEPTIKFYTKQILEGLKYLHENQIVHRDIKGDNVLVNTYSGVVKISDFGTSKRLAGVNPCTETFTGTLQYMAPEIIDQGPRGYGAPADIWSLGCTIIEMATSKPPFHELGEPQAAMFKVGMFKIHPEIPEALSAEARAFILSCFEPDPHKRATTAELLREGFLRQVNKGKKNRIAFKPSEGPRGVVLALPTQGEPMATSSSEHGSVSPDSDAQPDALFERTRAPRHHLGHLLSVPDESSALEDRGLASSPEDRDQGLFLLRKDSERRAILYKILWEEQNQVASNLQECVAQSSEELHLSVGHIKQIIGILRDFIRSPEHRVMATTISKLKVDLDFDSSSISQIHLVLFGFQDAVNKILRNHLIRPHWMFAMDNIIRRAVQAAVTILIPELRAHFEPTCETEGVDKDMDEAEEGYPPATGPGQEAQPHQQHLSLQLGELRQETNRLLEHLVEKEREYQNLLRQTLEQKTQELYHLQLKLKSNCITENPAGPYGQRTDKELIDWLRLQGADAKTIEKIVEEGYTLSDILNEITKEDLRYLRLRGGLLCRLWSAVSQYRRAQEASETKDKA.

A disordered region spans residues 1 to 58 (MESGGGNAPAGALGAASESPQCPPPPGVEGAAGPAEPDGAAEGAAGGSGEGESGGGPR). The span at 28–43 (VEGAAGPAEPDGAAEG) shows a compositional bias: low complexity. Residues 44–57 (AAGGSGEGESGGGP) show a composition bias toward gly residues. Positions 652–908 (NGERVVLGKG…TAELLREGFL (257 aa)) constitute a Protein kinase domain. Residues 658 to 666 (LGKGTYGIV) and Lys-681 contribute to the ATP site. The Proton acceptor role is filled by Asp-773. The tract at residues 939–958 (EPMATSSSEHGSVSPDSDAQ) is disordered. A compositionally biased stretch (polar residues) spans 942–955 (ATSSSEHGSVSPDS). A Phosphoserine modification is found at Ser-994. The stretch at 1179 to 1225 (QLGELRQETNRLLEHLVEKEREYQNLLRQTLEQKTQELYHLQLKLKS) forms a coiled coil.

Belongs to the protein kinase superfamily. STE Ser/Thr protein kinase family. MAP kinase kinase kinase subfamily. The cofactor is Mg(2+). In terms of tissue distribution, isoform 2 and isoform 3 are widely expressed. Isoform 2 highest levels are observed in fetal brain, and isoform 3 highest levels in pancreas, peripheral blood leukocytes, fetal brain and spleen.

The catalysed reaction is L-seryl-[protein] + ATP = O-phospho-L-seryl-[protein] + ADP + H(+). The enzyme catalyses L-threonyl-[protein] + ATP = O-phospho-L-threonyl-[protein] + ADP + H(+). With respect to regulation, contains an N-terminal autoinhibitory domain. Activated by phosphorylation at Thr-812, inhibited by phosphorylation at Ser-924 and Ser-994. In terms of biological role, serine/threonine kinase which acts as a component of the MAP kinase signal transduction pathway. Once activated, acts as an upstream activator of the p38 MAPK signal transduction cascade through the phosphorylation and activation of several MAP kinase kinases. May function in a signal transduction pathway that is activated by various cell stresses and leads to apoptosis. Involved in phosphorylation of WNK4 in response to osmotic stress or hypotonic low-chloride stimulation via the p38 MAPK signal transduction cascade. This Homo sapiens (Human) protein is Mitogen-activated protein kinase kinase kinase 15 (MAP3K15).